Consider the following 2329-residue polypeptide: Pre-mRNA-splicing factor 8 homolog (2329 aa).

The tract at residues Met-1–Pro-53 is disordered. Basic and acidic residues predominate over residues Arg-34–Pro-53. The tract at residues Thr-804–Leu-1295 is reverse transcriptase homology domain. Residues Asn-1296 to Phe-1570 are linker. Residues Met-1506–Leu-1519 are important for branch point selection. The interval Leu-1574–Gln-1745 is restriction endonuclease homology domain. An RNase H homology domain region spans residues Asn-1760 to Ser-2013. Residues Thr-2096 to Gly-2227 form the MPN domain.

Part of the U5 snRNP complex and of the U4/U6-U5 tri-snRNP complex.

Its subcellular location is the nucleus. Functionally, functions as a scaffold that mediates the ordered assembly of spliceosomal proteins and snRNAs. Required for the assembly of the U4/U6-U5 tri-snRNP complex. Functions as a scaffold that positions spliceosomal U2, U5 and U6 snRNAs at splice sites on pre-mRNA substrates, so that splicing can occur. Interacts with both the 5' and the 3' splice site. This is Pre-mRNA-splicing factor 8 homolog (prp-8) from Caenorhabditis elegans.